Reading from the N-terminus, the 221-residue chain is Ribosomal RNA small subunit methyltransferase Nep1 (221 aa).

S-adenosyl-L-methionine is bound by residues Gly174, Gly179, and Ile196–Leu201.

Belongs to the class IV-like SAM-binding methyltransferase superfamily. RNA methyltransferase NEP1 family. In terms of assembly, homodimer.

The enzyme catalyses a pseudouridine in rRNA + S-adenosyl-L-methionine = an N(1)-methylpseudouridine in rRNA + S-adenosyl-L-homocysteine + H(+). Functionally, methyltransferase involved in ribosomal biogenesis. Specifically catalyzes the N1-methylation of the pseudouridine corresponding to position 914 in M.jannaschii 16S rRNA. The protein is Ribosomal RNA small subunit methyltransferase Nep1 of Pyrobaculum calidifontis (strain DSM 21063 / JCM 11548 / VA1).